Here is a 114-residue protein sequence, read N- to C-terminus: MQQAKAVARTVRIAPRKARLVMDLIRGKQVGEAVSILNHTPKAASPIIEKVLKSAIANAEHNYEMDANNLVVTQAYVNEGPTLKRFRPRAMGRASQINKRTSHITIVVSEKKEG.

It belongs to the universal ribosomal protein uL22 family. In terms of assembly, part of the 50S ribosomal subunit.

Functionally, this protein binds specifically to 23S rRNA; its binding is stimulated by other ribosomal proteins, e.g. L4, L17, and L20. It is important during the early stages of 50S assembly. It makes multiple contacts with different domains of the 23S rRNA in the assembled 50S subunit and ribosome. Its function is as follows. The globular domain of the protein is located near the polypeptide exit tunnel on the outside of the subunit, while an extended beta-hairpin is found that lines the wall of the exit tunnel in the center of the 70S ribosome. In Bacillus licheniformis (strain ATCC 14580 / DSM 13 / JCM 2505 / CCUG 7422 / NBRC 12200 / NCIMB 9375 / NCTC 10341 / NRRL NRS-1264 / Gibson 46), this protein is Large ribosomal subunit protein uL22.